Consider the following 210-residue polypeptide: Probable septum site-determining protein MinC (210 aa).

This sequence belongs to the MinC family. Interacts with MinD and FtsZ.

Its function is as follows. Cell division inhibitor that blocks the formation of polar Z ring septums. Rapidly oscillates between the poles of the cell to destabilize FtsZ filaments that have formed before they mature into polar Z rings. Prevents FtsZ polymerization. The protein is Probable septum site-determining protein MinC of Clostridium novyi (strain NT).